Here is a 156-residue protein sequence, read N- to C-terminus: Persephin (156 aa).

The first 21 residues, 1–21 (MAAGRLRILFLLLLSLHLGLG), serve as a signal peptide directing secretion. 3 disulfide bridges follow: cysteine 66–cysteine 124, cysteine 93–cysteine 152, and cysteine 97–cysteine 154.

The protein belongs to the TGF-beta family. GDNF subfamily. As to quaternary structure, homodimer; disulfide-linked. Interacts with GFRA4 coreceptor and RET: forms a 2:2:2 ternary complex composed of PSPN ligand, GFRA4 and RET receptor. Expressed at low levels in substantia nigra. Cochlea.

The protein resides in the secreted. In terms of biological role, growth factor that exhibits neurotrophic activity on mesencephalic dopaminergic and motor neurons. Acts by binding to its coreceptor, GFRA4, leading to autophosphorylation and activation of the RET receptor. The protein is Persephin of Rattus norvegicus (Rat).